Consider the following 304-residue polypeptide: Agmatinase (304 aa).

The Mn(2+) site is built by His126, Asp149, His151, Asp153, Asp230, and Asp232.

Belongs to the arginase family. Agmatinase subfamily. Mn(2+) serves as cofactor.

The catalysed reaction is agmatine + H2O = urea + putrescine. It functions in the pathway amine and polyamine biosynthesis; putrescine biosynthesis via agmatine pathway; putrescine from agmatine: step 1/1. In terms of biological role, catalyzes the formation of putrescine from agmatine. The sequence is that of Agmatinase from Edwardsiella ictaluri (strain 93-146).